The sequence spans 246 residues: Zinc import ATP-binding protein ZnuC (246 aa).

Residues 24-243 (LKIENLALAY…RTLNEIFSSY (220 aa)) form the ABC transporter domain. 56-63 (GPNGGGKT) is a binding site for ATP.

Belongs to the ABC transporter superfamily. Zinc importer (TC 3.A.1.15.5) family. The complex is composed of two ATP-binding proteins (ZnuC), two transmembrane proteins (ZnuB) and a solute-binding protein (ZnuA).

The protein resides in the cell membrane. It catalyses the reaction Zn(2+)(out) + ATP(in) + H2O(in) = Zn(2+)(in) + ADP(in) + phosphate(in) + H(+)(in). Part of the ABC transporter complex ZnuABC involved in zinc import. Responsible for energy coupling to the transport system. The chain is Zinc import ATP-binding protein ZnuC from Wolbachia pipientis wMel.